The following is a 284-amino-acid chain: Ubiquitin thioesterase otubain-like (284 aa).

Residues 77–274 (GEIRYIRGDG…PGHYDVIYKK (198 aa)) enclose the OTU domain. The active site involves D85. Residue C88 is the Nucleophile of the active site. Substrate is bound at residue I176. Catalysis depends on residues H245 and H267.

Belongs to the peptidase C65 family.

It carries out the reaction Thiol-dependent hydrolysis of ester, thioester, amide, peptide and isopeptide bonds formed by the C-terminal Gly of ubiquitin (a 76-residue protein attached to proteins as an intracellular targeting signal).. Hydrolase that can remove conjugated ubiquitin from proteins and plays an important regulatory role at the level of protein turnover by preventing degradation. Specifically cleaves 'Lys-48'-linked polyubiquitin. The chain is Ubiquitin thioesterase otubain-like (otub-1) from Caenorhabditis elegans.